A 770-amino-acid polypeptide reads, in one-letter code: Amyloid-beta precursor protein (770 aa).

Residues 1-17 (MLPGLALVLLAAWTARA) form the signal peptide. At 18–701 (LEVPTDGNAG…AEDVGSNKGA (684 aa)) the chain is on the extracellular side. Residues 28–123 (LLAEPQVAMF…PYRCLVGEFV (96 aa)) form a GFLD subdomain region. An E1 domain is found at 28-189 (LLAEPQVAMF…RGVEFVCCPL (162 aa)). Disulfide bonds link Cys-38/Cys-62, Cys-73/Cys-117, Cys-98/Cys-105, Cys-133/Cys-187, Cys-144/Cys-174, and Cys-158/Cys-186. 96-110 (NWCKRSRKQCKTHTH) provides a ligand contact to heparin. A cuBD subdomain region spans residues 131–189 (DKCKFLHQERMDVCETHLHWHTVAKETCSEKSTNLHDYGMLLPCGIDKFRGVEFVCCPL). Positions 135–155 (FLHQERMDVCETHLHWHTVAK) are copper-binding. Cu(2+)-binding residues include His-147, His-151, and Tyr-168. The zinc-binding stretch occupies residues 181–188 (GVEFVCCP). 3 residues coordinate Zn(2+): Glu-183, Cys-186, and Cys-187. Residues 196 to 207 (IDSADAEEDDSD) show a composition bias toward acidic residues. The disordered stretch occupies residues 196–284 (IDSADAEEDD…TTTTTTESVE (89 aa)). At Ser-198 the chain carries Phosphoserine; by CK2. At Ser-206 the chain carries Phosphoserine; by CK1. Sulfotyrosine occurs at positions 217 and 262. Acidic residues predominate over residues 228–264 (VAEEEEVADVEEEEAEDDEDDEDGDEVEEEAEEPYEE). The span at 268–281 (RTTSIATTTTTTTE) shows a compositional bias: low complexity. Cystine bridges form between Cys-291–Cys-341, Cys-300–Cys-324, and Cys-316–Cys-337. A BPTI/Kunitz inhibitor domain is found at 291–341 (CSEQAETGPCRAMISRWYFDVTEGKCAPFFYGGCGGNRNNFDTEEYCMAVC). A Sulfotyrosine modification is found at Tyr-336. An OX-2 motif is present at residues 344–365 (VMSQSLLKTTQEHLPQDPVKLP). Residues 374 to 565 (AVDKYLETPG…EEIQDEVDEL (192 aa)) enclose the E2 domain. Residues 391-423 (FQKAKERLEAKHRERMSQVMREWEEAERQAKNL) form a heparin-binding region. Residue Ser-441 is modified to Phosphoserine. Positions 491–522 (FNMLKKYVRAEQKDRQHTLKHFEHVRMVDPKK) are heparin-binding. Position 497 is a phosphotyrosine (Tyr-497). The interval 523-540 (AAQIRSQVMTHLRVIYER) is collagen-binding. N-linked (GlcNAc...) asparagine glycans are attached at residues Asn-542 and Asn-571. The Cu(2+) site is built by His-677, Tyr-681, His-684, and His-685. Positions 677, 681, 684, and 685 each coordinate Zn(2+). Residues 695–722 (VGSNKGAIIGLMVGGVVIATVIVITLVM) are interaction with PSEN1. The chain crosses the membrane as a helical span at residues 702-722 (IIGLMVGGVVIATVIVITLVM). Over 723–770 (LKKKQYTSIHHGVVEVDAAVTPEERHLSKMQQNGYENPTYKFFEQMQN) the chain is Cytoplasmic. The Basolateral sorting signal motif lies at 724-734 (KKKQYTSIHHG). Residue Thr-729 is modified to Phosphothreonine. At Ser-730 the chain carries Phosphoserine; by APP-kinase I. Residues 732–751 (HHGVVEVDAAVTPEERHLSK) are interaction with G(o)-alpha. Residue Thr-743 is modified to Phosphothreonine; by CDK5 and MAPK10. The tract at residues 756–770 (GYENPTYKFFEQMQN) is required for the interaction with KIF5B and for anterograde transport in axons. Tyr-757 is subject to Phosphotyrosine; by ABL1. A YENPXY motif; contains endocytosis signal motif is present at residues 757 to 762 (YENPTY). A Glycyl lysine isopeptide (Lys-Gly) (interchain with G-Cter in ubiquitin) cross-link involves residue Lys-763.

It belongs to the APP family. In terms of assembly, binds, via its C-terminus, to the PID domain of several cytoplasmic proteins, including APBB family members, the APBA family, MAPK8IP1, SHC1 and NUMB and DAB1. Binding to DAB1 inhibits its serine phosphorylation. Interacts (via NPXY motif) with DAB2 (via PID domain); the interaction is impaired by tyrosine phosphorylation of the NPXY motif. Also interacts with GPCR-like protein BPP, APPBP1, IB1, KNS2 (via its TPR domains), APPBP2 (via BaSS) and DDB1. In vitro, it binds MAPT via the MT-binding domains. Associates with microtubules in the presence of ATP and in a kinesin-dependent manner. Interacts, through a C-terminal domain, with GNAO1. Amyloid-beta protein 42 binds CHRNA7 in hippocampal neurons. Amyloid-beta associates with HADH2. Interacts with CPEB1, ANKS1B and AGER. Interacts with ITM2B. Interacts with ITM2C. Interacts with IDE. Can form homodimers; dimerization is enhanced in the presence of Cu(2+) ions. Can form homodimers; this is promoted by heparin binding. Amyloid-beta protein 40 interacts with S100A9. CTF-alpha product of APP interacts with GSAP. Interacts with SORL1 (via N-terminal ectodomain); this interaction retains APP in the trans-Golgi network and reduces processing into soluble APP-alpha and amyloid-beta peptides. The C99 fragment also interacts with SORL1. Interacts with PLD3. Interacts with VDAC1. Interacts with NSG1; could regulate APP processing. Amyloid-beta protein 42 interacts with FPR2. Interacts (via transmembrane region) with PSEN1; the interaction is direct. Interacts with LRRK2. Interacts (via cytoplasmic domain) with KIF5B. Interacts (via C-terminus) with APBB2/FE65L1 (via C-terminus). Interacts (via intracellular domain) with APBB3. In terms of processing, proteolytically processed under normal cellular conditions. Cleavage either by alpha-secretase, beta-secretase or theta-secretase leads to generation and extracellular release of soluble APP peptides, S-APP-alpha and S-APP-beta, and the retention of corresponding membrane-anchored C-terminal fragments, C80, C83 and C99. Subsequent processing of C80 and C83 by gamma-secretase yields P3 peptides. This is the major secretory pathway and is non-amyloidogenic. Alternatively, presenilin/nicastrin-mediated gamma-secretase processing of C99 releases the amyloid-beta proteins, amyloid-beta protein 40 and amyloid-beta protein 42, major components of amyloid plaques, and the cytotoxic C-terminal fragments, gamma-CTF(50), gamma-CTF(57) and gamma-CTF(59). PSEN1 cleavage is more efficient with C83 than with C99 as substrate (in vitro). Amyloid-beta protein 40 and Amyloid-beta protein 42 are cleaved by ACE. Many other minor amyloid-beta peptides, amyloid-beta 1-X peptides, are found in cerebral spinal fluid (CSF) including the amyloid-beta X-15 peptides, produced from the cleavage by alpha-secretase. Proteolytically cleaved by caspases during neuronal apoptosis. Cleavage at Asp-739 by either caspase-3, -8 or -9 results in the production of the neurotoxic C31 peptide and the increased production of amyloid-beta peptides. Post-translationally, N- and O-glycosylated. In terms of processing, phosphorylation in the C-terminal on tyrosine, threonine and serine residues is neuron-specific. Phosphorylation can affect APP processing, neuronal differentiation and interaction with other proteins. Phosphorylated on Thr-743 in neuronal cells by Cdc5 kinase and Mapk10, in dividing cells by Cdc2 kinase in a cell-cycle dependent manner with maximal levels at the G2/M phase and, in vitro, by GSK-3-beta. The Thr-743 phosphorylated form causes a conformational change which reduces binding of Fe65 family members. In dopaminergic (DA) neurons, phosphorylation on Thr-743 by LRKK2 promotes the production and the nuclear translocation of the APP intracellular domain (AICD) which induces DA neuron apoptosis. Phosphorylation on Tyr-757 is required for SHC binding. Phosphorylated in the extracellular domain by casein kinases on both soluble and membrane-bound APP. This phosphorylation is inhibited by heparin. Extracellular binding and reduction of copper, results in a corresponding oxidation of Cys-144 and Cys-158, and the formation of a disulfide bond. Post-translationally, trophic-factor deprivation triggers the cleavage of surface APP by beta-secretase to release sAPP-beta which is further cleaved to release an N-terminal fragment of APP (N-APP). In terms of processing, amyloid-beta peptides are degraded by IDE. Sulfated on tyrosine residues.

It localises to the cell membrane. Its subcellular location is the membrane. It is found in the perikaryon. The protein resides in the cell projection. The protein localises to the growth cone. It localises to the clathrin-coated pit. Its subcellular location is the early endosome. It is found in the cytoplasmic vesicle. The protein resides in the endoplasmic reticulum. The protein localises to the golgi apparatus. It localises to the secreted. Its subcellular location is the cell surface. It is found in the nucleus. The protein resides in the cytoplasm. Its function is as follows. Functions as a cell surface receptor and performs physiological functions on the surface of neurons relevant to neurite growth, neuronal adhesion and axonogenesis. Interaction between APP molecules on neighboring cells promotes synaptogenesis. Involved in cell mobility and transcription regulation through protein-protein interactions. Can promote transcription activation through binding to APBB1-KAT5 and inhibit Notch signaling through interaction with Numb. Couples to apoptosis-inducing pathways such as those mediated by G(o) and JIP. Inhibits G(o)-alpha ATPase activity. Acts as a kinesin I membrane receptor, mediating the axonal transport of beta-secretase and presenilin 1. By acting as a kinesin I membrane receptor, plays a role in axonal anterograde transport of cargo towards synapses in axons. May be involved in copper homeostasis/oxidative stress through copper ion reduction. In vitro, copper-metallated APP induces neuronal death directly or is potentiated through Cu(2+)-mediated low-density lipoprotein oxidation. Can regulate neurite outgrowth through binding to components of the extracellular matrix such as heparin and collagen I and IV. Induces a AGER-dependent pathway that involves activation of p38 MAPK, resulting in internalization of amyloid-beta peptide and mitochondrial dysfunction in cultured cortical neurons. Provides Cu(2+) ions for GPC1 which are required for release of nitric oxide (NO) and subsequent degradation of the heparan sulfate chains on GPC1. Functionally, amyloid-beta peptides are lipophilic metal chelators with metal-reducing activity. Binds transient metals such as copper, zinc and iron. The gamma-CTF peptides as well as the caspase-cleaved peptides, including C31, are potent enhancers of neuronal apoptosis. The sequence is that of Amyloid-beta precursor protein from Sus scrofa (Pig).